The primary structure comprises 727 residues: Pentatricopeptide repeat-containing protein At4g20740 (727 aa).

The segment at 1 to 84 is disordered; that stretch reads MKSPKPPNLS…PSPPSHSTVI (84 aa). The span at 38-56 shows a compositional bias: polar residues; it reads SNRQSIPRVSPQPQSNSLA. Over residues 59–70 the composition is skewed to basic and acidic residues; it reads TPFDLRKWDPET. PPR repeat units lie at residues 157–191, 192–226, 227–261, 262–296, 297–331, 332–366, 367–401, 402–436, 437–471, 506–540, 541–575, 576–606, 612–646, and 647–681; these read DFAA…GRPP, SEKQ…GFKP, RVFL…GLVE, ESTT…LCKP, DVFA…EIKP, DVMA…QILI, DREI…GYIA, DIGI…ELEP, DFET…GYPV, SVSV…GFEP, DSSS…SCVP, SIAA…CLGN, MEFK…GVFI, and NEVI…KVMT.

The protein belongs to the PPR family. P subfamily.

This chain is Pentatricopeptide repeat-containing protein At4g20740, found in Arabidopsis thaliana (Mouse-ear cress).